A 450-amino-acid chain; its full sequence is Phosphoglucosamine mutase (450 aa).

Serine 102 acts as the Phosphoserine intermediate in catalysis. Residues serine 102, aspartate 244, aspartate 246, and aspartate 248 each coordinate Mg(2+). Residue serine 102 is modified to Phosphoserine.

It belongs to the phosphohexose mutase family. Requires Mg(2+) as cofactor. Post-translationally, activated by phosphorylation.

It carries out the reaction alpha-D-glucosamine 1-phosphate = D-glucosamine 6-phosphate. Catalyzes the conversion of glucosamine-6-phosphate to glucosamine-1-phosphate. The sequence is that of Phosphoglucosamine mutase from Bartonella bacilliformis (strain ATCC 35685 / KC583 / Herrer 020/F12,63).